Here is a 279-residue protein sequence, read N- to C-terminus: ATP-dependent Clp protease proteolytic subunit-related protein 2, chloroplastic (279 aa).

A chloroplast-targeting transit peptide spans 1-54 (MAVSFNTTLHQPSLSPSCSIKLYSGLKPQSASFLASGYQNLNKEFYGRVYKSLQ).

Belongs to the peptidase S14 family. Component of the chloroplastic Clp protease core complex which consist of at least 16 proteins: CLPP4 (3 copies), CLPP5 (3 copies), CLPR4 (2 copies), ClpP1 (1 copy), CLPP6 (1 copy), CLPR2 (1 copy), CLPT1 (1 copy), CLPT2 (1 copy) and 3 copies of CLPP3 and/or CLPR1 and/or CLPR3. The core complex is organized in two heptameric rings, one containing CLPP3,4,5,6 in a 1:2:3:1 ratio and the other CLPP1 and CLPR1,2,3,4 in a 3:1:1:1:1 ratio. As to expression, expressed at least in leaves and roots.

The protein resides in the plastid. The protein localises to the chloroplast. Its function is as follows. Required for chloroplast development and integrity. Involved in the regulation of plastoglobules formation. The polypeptide is ATP-dependent Clp protease proteolytic subunit-related protein 2, chloroplastic (Arabidopsis thaliana (Mouse-ear cress)).